Consider the following 72-residue polypeptide: Alpha-elapitoxin-Dpp2c (72 aa).

Intrachain disulfides connect Cys-3/Cys-21, Cys-14/Cys-42, Cys-27/Cys-31, Cys-46/Cys-57, and Cys-58/Cys-63.

This sequence belongs to the three-finger toxin family. Long-chain subfamily. Type II alpha-neurotoxin sub-subfamily. Expressed by the venom gland.

It localises to the secreted. Its function is as follows. Binds with high affinity to muscular (alpha-1/CHRNA1) and neuronal (alpha-7/CHRNA7) nicotinic acetylcholine receptor (nAChR) and inhibits acetylcholine from binding to the receptor, thereby impairing neuromuscular and neuronal transmission. The protein is Alpha-elapitoxin-Dpp2c of Dendroaspis polylepis polylepis (Black mamba).